The primary structure comprises 121 residues: uncharacterized protein (121 aa).

The disordered stretch occupies residues 1–121; the sequence is MGQVLSICSS…QQEREQIKWD (121 aa). Residue G2 is the site of N-myristoyl glycine attachment. The S-palmitoyl cysteine moiety is linked to residue C8. Composition is skewed to basic and acidic residues over residues 11–23, 73–83, 90–105, and 112–121; these read KSKE…EKPT, AAEKRNIEKKK, RQLE…EHLQ, and QQEREQIKWD.

This sequence to yeast YGL108C. Myristoylated. Post-translationally, the N-myristoylated protein is further palmitoylated.

It localises to the cytoplasm. It is found in the cytosol. This is an uncharacterized protein from Schizosaccharomyces pombe (strain 972 / ATCC 24843) (Fission yeast).